The following is a 287-amino-acid chain: Nitrogenase iron protein (287 aa).

8–15 provides a ligand contact to ATP; the sequence is GKGGIGKS. Cysteine 96 is a [4Fe-4S] cluster binding site. ADP-ribosylarginine; by dinitrogenase reductase ADP-ribosyltransferase is present on arginine 99. Residue cysteine 130 participates in [4Fe-4S] cluster binding.

The protein belongs to the NifH/BchL/ChlL family. In terms of assembly, homodimer. [4Fe-4S] cluster serves as cofactor. In terms of processing, the reversible ADP-ribosylation of Arg-99 inactivates the nitrogenase reductase and regulates nitrogenase activity.

The enzyme catalyses N2 + 8 reduced [2Fe-2S]-[ferredoxin] + 16 ATP + 16 H2O = H2 + 8 oxidized [2Fe-2S]-[ferredoxin] + 2 NH4(+) + 16 ADP + 16 phosphate + 6 H(+). Its function is as follows. The key enzymatic reactions in nitrogen fixation are catalyzed by the nitrogenase complex, which has 2 components: the iron protein and the molybdenum-iron protein. This chain is Nitrogenase iron protein, found in Frankia casuarinae (strain DSM 45818 / CECT 9043 / HFP020203 / CcI3).